Reading from the N-terminus, the 541-residue chain is Chaperonin GroEL (541 aa).

ATP contacts are provided by residues 29 to 32 (TLGP), 86 to 90 (DGTTT), Gly-413, 476 to 478 (NAA), and Asp-492. Positions 521–541 (KPEDNPAPAAPAANPGMGGMM) are disordered. The span at 526-535 (PAPAAPAANP) shows a compositional bias: low complexity.

The protein belongs to the chaperonin (HSP60) family. In terms of assembly, forms a cylinder of 14 subunits composed of two heptameric rings stacked back-to-back. Interacts with the co-chaperonin GroES.

It is found in the cytoplasm. The catalysed reaction is ATP + H2O + a folded polypeptide = ADP + phosphate + an unfolded polypeptide.. Functionally, together with its co-chaperonin GroES, plays an essential role in assisting protein folding. The GroEL-GroES system forms a nano-cage that allows encapsulation of the non-native substrate proteins and provides a physical environment optimized to promote and accelerate protein folding. The chain is Chaperonin GroEL from Levilactobacillus brevis (strain ATCC 367 / BCRC 12310 / CIP 105137 / JCM 1170 / LMG 11437 / NCIMB 947 / NCTC 947) (Lactobacillus brevis).